We begin with the raw amino-acid sequence, 181 residues long: Histone deacetylase complex subunit SAP30L-A (181 aa).

2 disulfides stabilise this stretch: Cys-26/Cys-27 and Cys-35/Cys-71. The Atypical zinc-finger motif lies at 26–74 (CCLIDGGERCPRPAGNASFSKRVQKSISQKKLKLDIDKNVRHLYICDFH). Residues 82 to 103 (RNKRKRKTSDDGGDSPEHETDI) form a disordered region. The Nuclear localization signal (NLS) signature appears at 83–88 (NKRKRK). The tract at residues 85–87 (RKR) is important for DNA and phosphoinositide binding.

It belongs to the SAP30 family. Interacts with components of the histone deacetylase complex sin3a, hdac1 and hdac2. Binds histones and nucleosomes.

It is found in the nucleus. Its subcellular location is the nucleolus. Functions as a transcription repressor, probably via its interaction with histone deacetylase complexes. Involved in the functional recruitment of the class 1 Sin3-histone deacetylase complex (HDAC) to the nucleolus. Binds DNA, apparently without sequence-specificity, and bends bound double-stranded DNA. Binds phosphoinositol phosphates (phosphoinositol 3-phosphate, phosphoinositol 4-phosphate and phosphoinositol 5-phosphate) via the same basic sequence motif that mediates DNA binding and nuclear import. In Xenopus laevis (African clawed frog), this protein is Histone deacetylase complex subunit SAP30L-A (sap30l-a).